Consider the following 90-residue polypeptide: Accessory gland-specific peptide 26Ab (90 aa).

Residues 1-21 (MNYFAVICIFSCICLWQFSDA) form the signal peptide.

In terms of tissue distribution, main cells and secondary cells of the accessory glands of 1 day old virgin males (at protein level). In 5 day old virgin males, only detected in the secondary cells (at protein level). Reappears in the main cells after mating (at protein level). First detected in adult males 3-4 hr after eclosion, levels increase reaching a peak at day 3-5 which is maintained until at least day 10 of adulthood (at protein level). In unmated male adults, levels are maintained for the first 6 days of adulthood and then gradually decrease for at least the next 8 days. No expression in females.

It is found in the secreted. The protein resides in the extracellular space. The protein localises to the cytoplasm. This protein is transferred from male to female during mating and may affect egglaying and behavior after mating. This chain is Accessory gland-specific peptide 26Ab, found in Drosophila melanogaster (Fruit fly).